The sequence spans 63 residues: Overexpressed in colon carcinoma 1 protein homolog (63 aa).

Residues 1 to 10 (MGCGNSTATS) show a composition bias toward polar residues. Positions 1–37 (MGCGNSTATSAAAGRGKPGAVKDATEDSITEDDKRRN) are disordered.

The protein belongs to the OCC1 family.

In Rattus norvegicus (Rat), this protein is Overexpressed in colon carcinoma 1 protein homolog.